A 166-amino-acid polypeptide reads, in one-letter code: Crossover junction endodeoxyribonuclease RuvC (166 aa).

Catalysis depends on residues Asp-7, Glu-68, and Asp-141. Residues Asp-7, Glu-68, and Asp-141 each contribute to the Mg(2+) site.

The protein belongs to the RuvC family. Homodimer which binds Holliday junction (HJ) DNA. The HJ becomes 2-fold symmetrical on binding to RuvC with unstacked arms; it has a different conformation from HJ DNA in complex with RuvA. In the full resolvosome a probable DNA-RuvA(4)-RuvB(12)-RuvC(2) complex forms which resolves the HJ. The cofactor is Mg(2+).

The protein localises to the cytoplasm. The catalysed reaction is Endonucleolytic cleavage at a junction such as a reciprocal single-stranded crossover between two homologous DNA duplexes (Holliday junction).. Its function is as follows. The RuvA-RuvB-RuvC complex processes Holliday junction (HJ) DNA during genetic recombination and DNA repair. Endonuclease that resolves HJ intermediates. Cleaves cruciform DNA by making single-stranded nicks across the HJ at symmetrical positions within the homologous arms, yielding a 5'-phosphate and a 3'-hydroxyl group; requires a central core of homology in the junction. The consensus cleavage sequence is 5'-(A/T)TT(C/G)-3'. Cleavage occurs on the 3'-side of the TT dinucleotide at the point of strand exchange. HJ branch migration catalyzed by RuvA-RuvB allows RuvC to scan DNA until it finds its consensus sequence, where it cleaves and resolves the cruciform DNA. This is Crossover junction endodeoxyribonuclease RuvC from Koribacter versatilis (strain Ellin345).